The chain runs to 158 residues: 18.1 kDa class I heat shock protein (158 aa).

Residues 44-158 (ENPAFVSTRV…AEVKSIEISG (115 aa)) form the sHSP domain.

The protein belongs to the small heat shock protein (HSP20) family. Forms oligomeric structures.

The protein resides in the cytoplasm. The polypeptide is 18.1 kDa class I heat shock protein (HSP18.1) (Pisum sativum (Garden pea)).